Reading from the N-terminus, the 514-residue chain is MERPLHLLLVFLSSPWLLLLQGVSSLQFTRDDFPHDFAFGAGTSAYQYEGGAAEDGRTPSIWDTYTHSGRHPEDETGDVASDGYHKYKEDVKLMSEIGLEAYRFTISWSRLIPSGRGAVNLKALQFYNSMINELVKAGIQIHVVMYHMDLPQSLQDEYGGWISPKIVDDFTAYADVCFREFGDRVVHWTTVLEPNAMAQAGYDMGILPPNRCSYPFGSNCTAGNSSVEPYLFIHHSLLAHASAVRLYREKYKVAQKGIIGINIYSMWFYPFTDSAEEIGATERAKKFIYGWILHPLVFGDYPDTMKKAAGSRLPIFSNHESEMVTNSFDFIGLNHYSSVYTSNNNNVVKAPLQDLTADVATLFRVTKNDTPTPVFVPGTIVDPRGLEHALKYIREKYGNLPIYIQENGSGSSSETLDDVERINYLAKYIAATLKAIRSGANVKGYSMWSFVDLYELFGGYSTWHFGLVAVDFDSEKRRRQPRRSASWYSEFLKNNSVIRVEEDGFVSAASHAQL.

Positions 1-25 are cleaved as a signal peptide; the sequence is MERPLHLLLVFLSSPWLLLLQGVSS. A beta-D-glucoside contacts are provided by Q47 and H147. The active-site Proton donor is E193. A disulfide bridge links C212 with C220. N-linked (GlcNAc...) asparagine glycans are attached at residues N219 and N224. Y336 and E406 together coordinate a beta-D-glucoside. E406 (nucleophile) is an active-site residue. N407 carries an N-linked (GlcNAc...) asparagine glycan. A beta-D-glucoside-binding residues include W448 and F465. N494 carries an N-linked (GlcNAc...) asparagine glycan.

It belongs to the glycosyl hydrolase 1 family.

The enzyme catalyses Hydrolysis of terminal, non-reducing beta-D-glucosyl residues with release of beta-D-glucose.. The polypeptide is Beta-glucosidase 21 (BGLU21) (Oryza sativa subsp. japonica (Rice)).